The chain runs to 794 residues: Signal transducer and activator of transcription 5A (794 aa).

At Y90 the chain carries Phosphotyrosine. S128 and S193 each carry phosphoserine. An SH2 domain is found at 589–686; the sequence is WNDGAILGFV…EVFSKYYTPV (98 aa). Y682 is subject to Phosphotyrosine. Y694 is modified (phosphotyrosine; by JAK2). Residues 773–794 are disordered; it reads DSLDSRLSPPAGLFTSARGSLS. S780 carries the phosphoserine modification.

This sequence belongs to the transcription factor STAT family. In terms of assembly, forms a homodimer or a heterodimer with a related family member. Binds NR3C1. Interacts with NCOA1 and SOCS7. Interacts with ERBB4. Interacts with EBF4. Interacts with CD69. Post-translationally, tyrosine phosphorylated in response to KITLG/SCF, IL2, IL3, IL7, IL15, CSF2/GMCSF, GH1, PRL, EPO and THPO. Activated KIT promotes phosphorylation on tyrosine residues and subsequent translocation to the nucleus. Tyrosine phosphorylated in response to constitutively activated FGFR1, FGFR2, FGFR3 and FGFR4. Tyrosine phosphorylation is required for DNA-binding activity and dimerization. Serine phosphorylation is also required for maximal transcriptional activity. Tyrosine phosphorylated in response to signaling via activated FLT3; wild-type FLT3 results in much weaker phosphorylation than constitutively activated mutant FLT3. Alternatively, can be phosphorylated by JAK2 at Tyr-694. ISGylated.

It is found in the cytoplasm. Its subcellular location is the nucleus. Carries out a dual function: signal transduction and activation of transcription. Mediates cellular responses to the cytokine KITLG/SCF and other growth factors. Mediates cellular responses to ERBB4. May mediate cellular responses to activated FGFR1, FGFR2, FGFR3 and FGFR4. Binds to the GAS element and activates PRL-induced transcription. Regulates the expression of milk proteins during lactation. The protein is Signal transducer and activator of transcription 5A (STAT5A) of Homo sapiens (Human).